The chain runs to 267 residues: Trehalose-phosphate phosphatase (267 aa).

Residue Asp-20 is the Nucleophile of the active site. Mg(2+) is bound by residues Asp-20, Asp-22, and Asp-198. 20-22 (DLD) serves as a coordination point for substrate.

The protein belongs to the trehalose phosphatase family. Mg(2+) serves as cofactor.

The catalysed reaction is alpha,alpha-trehalose 6-phosphate + H2O = alpha,alpha-trehalose + phosphate. The protein operates within glycan biosynthesis; trehalose biosynthesis. Its function is as follows. Removes the phosphate from trehalose 6-phosphate to produce free trehalose. This is Trehalose-phosphate phosphatase (otsB) from Salmonella typhimurium (strain SL1344).